Reading from the N-terminus, the 144-residue chain is Aklanonic acid methyl ester cyclase AcmA (144 aa).

Residues N51 and Q105 each contribute to the substrate site.

The protein belongs to the polyketide cyclase DnrD family. Homotetramer.

It catalyses the reaction methyl aklanonate = aklaviketone. Its pathway is antibiotic biosynthesis; daunorubicin biosynthesis. It participates in antibiotic biosynthesis; carminomycin biosynthesis. The protein operates within antibiotic biosynthesis; rhodomycin biosynthesis. It functions in the pathway antibiotic biosynthesis; aclacinomycin biosynthesis. In terms of biological role, involved in the biosynthesis of aklavinone which is an important precursor common to the formation of the clinically significant anthracyclines such as carminomycin, daunorubicin (daunomycin), rhodomycin, aclacinomycin T (aklavin) and aclacinomycin A (aclarubicin). These compounds are aromatic polyketide antibiotics that exhibit high cytotoxicity and are widely applied in the chemotherapy of a variety of cancers. Catalyzes the cyclization of aklanonic acid methyl ester to yield aklaviketone. It is also able to use nogalonic acid methyl ester as substrate, but produces exclusively auraviketone with C9-R stereochemistry. The polypeptide is Aklanonic acid methyl ester cyclase AcmA (acma) (Streptomyces galilaeus).